We begin with the raw amino-acid sequence, 303 residues long: MAQITMSEMLKAGLQFGHQTRRWNPKMKQYILTERNGIYIINLFKTLDLIDVAYDFIKTTVAHNGTVLFVGTKKQAQEAIKNAATRVNMPYVSERWLGGMLTNFQTVSKRVNRLKELETMDFDDVHGSGLTKKELLLLKREKDKLERQLGGIRNMTRTPSAMFVVDINKEALAVEEAHKLGIPVVAIVDTNADPEAVEYPIPANDDAIRGIELLTNLFADAVAEGLLERSGNASKSESNSEQPMAAWEKELLEKNEKATLRENAVVTENEVKKTDEEEGASSEAARADAQNEEAVAKPGEEVE.

Residues 258–303 form a disordered region; that stretch reads ATLRENAVVTENEVKKTDEEEGASSEAARADAQNEEAVAKPGEEVE. The span at 294 to 303 shows a compositional bias: basic and acidic residues; it reads AVAKPGEEVE.

This sequence belongs to the universal ribosomal protein uS2 family.

This Bifidobacterium animalis subsp. lactis (strain AD011) protein is Small ribosomal subunit protein uS2.